The following is a 321-amino-acid chain: Fimbria adhesin protein (321 aa).

The N-terminal stretch at 1 to 18 (MKKLTLFIGLMALGTTSA) is a signal peptide.

Belongs to the fimbrial protein family.

Its subcellular location is the fimbrium. This chain is Fimbria adhesin protein (mrkD), found in Klebsiella pneumoniae.